The chain runs to 306 residues: MTASLHIILDTDPGIDDAAAIAAALFAPQLDLQLITTVAGNVSVEKTTRNALQLLHFWDADVPLAQGAATPLLRPLRDAAYVHGESGMEGYDFVDHQRQPLAKPAFIAIRDVLMNAPEPMTLVAIGPLTNIALLLMHYPECACNIRRLVLMGGSAGRGNFTPNAEFNIAVDPEAAALVFRSGLEIVMCGLDVTNQAMLSPDFLNKLPALNRTGKMLHSLFNHYRSGSMRTGVRMHDLCAIAWLVRPELFTLQSCFVAVETQGEYTAGTTVVDIEGRLGQPANAQVALALDVDGFRQWVAEVFAYAP.

The active site involves H235.

This sequence belongs to the IUNH family. RihC subfamily.

In terms of biological role, hydrolyzes both purine and pyrimidine ribonucleosides with a broad-substrate specificity. This chain is Non-specific ribonucleoside hydrolase RihC, found in Salmonella enteritidis PT4 (strain P125109).